Here is a 302-residue protein sequence, read N- to C-terminus: Tegument protein VP22 (302 aa).

Positions 1-10 are enriched in basic and acidic residues; it reads MASSDGDRLC. Disordered stretches follow at residues 1–42 and 125–167; these read MASS…PDDS and SFTK…TATS. Residues 154–244 are interaction with gE; that stretch reads RPISFSTAPK…ANEADLGEGA (91 aa). Residues 157–167 show a composition bias toward polar residues; it reads SFSTAPKTATS. The short motif at 212–224 is the Nuclear export signal element; it reads LDRLLTGAVIRIT. Positions 243–302 are disordered; sequence GASVSKRGHNRKTGDLQGGMGNEPMYAQVRKPKSRTDTQTTGRITNRSRARSASRTDARK.

It belongs to the alphaherpesvirinae VP22 tegument protein family. As to quaternary structure, interacts with gE (via C-terminus); this interaction is necessary for the recruitment of VP22/ORF9 to the Golgi and its packaging into virions. Interacts with gM (via C-terminus). Interacts with VP16/ORF10; this interaction allows the formation of a tripartite complex composed of VP16/ORF10, VP22/ORF9 and VHS/ORF17. Interacts with the capsid-binding protein ORF44. Interacts with host CGAS. In terms of processing, highly phosphorylated in the host cell. Packaging is selective for underphosphorylated forms.

It localises to the virion tegument. It is found in the host cytoplasm. The protein localises to the host nucleus. Its subcellular location is the host Golgi apparatus. Its function is as follows. Tegument protein that plays different roles during the time course of infection. Participates in both the accumulation of viral mRNAs and viral protein translation at late time of infection. Modulates the RNase activity of the virion host shutoff protein ORF17 probably to ensure necessary levels of key cellular mRNAs and proteins. Plays a role in microtubule reorganization that occurs after viral infection by stabilizing microtubule network. Plays a role in the inhibition of host innate immune system by targeting the CGAS enzymatic activity which is the principal cytosolic DNA sensor that detects invading viral DNA. Acts by mediating disruption of liquid-like droplets in which CGAS is activated, thereby preventing CGAS activity. In Varicella-zoster virus (strain Oka vaccine) (HHV-3), this protein is Tegument protein VP22.